The chain runs to 69 residues: U5-agatoxin-Ao1a (69 aa).

A signal peptide spans 1–20 (MRTIISLLLLSAMVFAVIEA). Positions 21–34 (ISLEEGLQLFEGER) are excised as a propeptide. 2 disulfides stabilise this stretch: Cys-36–Cys-52 and Cys-43–Cys-57.

It belongs to the neurotoxin 01 (U2-agtx) family. Post-translationally, does not contain a cysteine at position 61 which disrupts the cysteine framework. As to expression, expressed by the venom gland.

Its subcellular location is the secreted. The polypeptide is U5-agatoxin-Ao1a (Agelena orientalis (Funnel-web spider)).